The chain runs to 228 residues: Geranylgeranylglyceryl phosphate synthase (228 aa).

K14 lines the sn-glycerol 1-phosphate pocket. Mg(2+)-binding residues include D16 and T42. Sn-glycerol 1-phosphate contacts are provided by residues 160–165 (YIEYSG), G190, and 210–211 (GN).

This sequence belongs to the GGGP/HepGP synthase family. Group I subfamily. Mg(2+) is required as a cofactor.

The protein resides in the cytoplasm. The catalysed reaction is sn-glycerol 1-phosphate + (2E,6E,10E)-geranylgeranyl diphosphate = sn-3-O-(geranylgeranyl)glycerol 1-phosphate + diphosphate. It participates in membrane lipid metabolism; glycerophospholipid metabolism. In terms of biological role, prenyltransferase that catalyzes the transfer of the geranylgeranyl moiety of geranylgeranyl diphosphate (GGPP) to the C3 hydroxyl of sn-glycerol-1-phosphate (G1P). This reaction is the first ether-bond-formation step in the biosynthesis of archaeal membrane lipids. This Methanocella arvoryzae (strain DSM 22066 / NBRC 105507 / MRE50) protein is Geranylgeranylglyceryl phosphate synthase.